The chain runs to 353 residues: UDP-3-O-acylglucosamine N-acyltransferase (353 aa).

Residue H258 is the Proton acceptor of the active site.

Belongs to the transferase hexapeptide repeat family. LpxD subfamily. In terms of assembly, homotrimer.

It carries out the reaction a UDP-3-O-[(3R)-3-hydroxyacyl]-alpha-D-glucosamine + a (3R)-hydroxyacyl-[ACP] = a UDP-2-N,3-O-bis[(3R)-3-hydroxyacyl]-alpha-D-glucosamine + holo-[ACP] + H(+). It functions in the pathway bacterial outer membrane biogenesis; LPS lipid A biosynthesis. Its function is as follows. Catalyzes the N-acylation of UDP-3-O-acylglucosamine using 3-hydroxyacyl-ACP as the acyl donor. Is involved in the biosynthesis of lipid A, a phosphorylated glycolipid that anchors the lipopolysaccharide to the outer membrane of the cell. The protein is UDP-3-O-acylglucosamine N-acyltransferase of Parvibaculum lavamentivorans (strain DS-1 / DSM 13023 / NCIMB 13966).